The following is a 173-amino-acid chain: Photosystem I assembly protein Ycf3 (173 aa).

TPR repeat units lie at residues 35–68 (AFAY…EDDP), 72–105 (SYIL…NPRM), and 120–153 (GEKA…APNN).

Belongs to the Ycf3 family.

It localises to the cellular thylakoid membrane. Functionally, essential for the assembly of the photosystem I (PSI) complex. May act as a chaperone-like factor to guide the assembly of the PSI subunits. The sequence is that of Photosystem I assembly protein Ycf3 from Trichodesmium erythraeum (strain IMS101).